The primary structure comprises 62 residues: U8-theraphotoxin-Cg1a 1 (62 aa).

Positions 1 to 21 (MKTLVLFIIFGLAALFLLSSA) are cleaved as a signal peptide. A propeptide spanning residues 22–29 (NELEETER) is cleaved from the precursor. 3 disulfides stabilise this stretch: Cys-31-Cys-46, Cys-38-Cys-51, and Cys-45-Cys-58.

The protein belongs to the neurotoxin 10 (Hwtx-1) family. 30 (Jztx-14) subfamily. In terms of tissue distribution, expressed by the venom gland.

The protein resides in the secreted. Probable ion channel inhibitor. The protein is U8-theraphotoxin-Cg1a 1 of Chilobrachys guangxiensis (Chinese earth tiger tarantula).